The primary structure comprises 280 residues: Release factor glutamine methyltransferase (280 aa).

S-adenosyl-L-methionine-binding positions include 120–124 (GTGSG), Asp-143, and Asn-186. Substrate is bound at residue 186-189 (NPPY).

The protein belongs to the protein N5-glutamine methyltransferase family. PrmC subfamily.

The catalysed reaction is L-glutaminyl-[peptide chain release factor] + S-adenosyl-L-methionine = N(5)-methyl-L-glutaminyl-[peptide chain release factor] + S-adenosyl-L-homocysteine + H(+). In terms of biological role, methylates the class 1 translation termination release factors RF1/PrfA and RF2/PrfB on the glutamine residue of the universally conserved GGQ motif. The protein is Release factor glutamine methyltransferase of Koribacter versatilis (strain Ellin345).